We begin with the raw amino-acid sequence, 268 residues long: UPF0739 protein C1orf74 homolog (268 aa).

It belongs to the UPF0739 family.

In Salmo salar (Atlantic salmon), this protein is UPF0739 protein C1orf74 homolog.